The chain runs to 533 residues: Dipeptidase (533 aa).

C3 is an active-site residue.

Belongs to the peptidase C69 family.

The catalysed reaction is an L-aminoacyl-L-amino acid + H2O = 2 an L-alpha-amino acid. In terms of biological role, hydrolyzes a wide range of dipeptides. Highest activity against Ala-Gln. This chain is Dipeptidase, found in Bifidobacterium longum (strain NCC 2705).